A 269-amino-acid polypeptide reads, in one-letter code: Elongation factor Ts (269 aa).

The interval 76-79 (TDFV) is involved in Mg(2+) ion dislocation from EF-Tu.

The protein belongs to the EF-Ts family.

Its subcellular location is the cytoplasm. Its function is as follows. Associates with the EF-Tu.GDP complex and induces the exchange of GDP to GTP. It remains bound to the aminoacyl-tRNA.EF-Tu.GTP complex up to the GTP hydrolysis stage on the ribosome. This chain is Elongation factor Ts, found in Deinococcus geothermalis (strain DSM 11300 / CIP 105573 / AG-3a).